Here is a 160-residue protein sequence, read N- to C-terminus: Small ribosomal subunit protein uS7 (160 aa).

It belongs to the universal ribosomal protein uS7 family. In terms of assembly, part of the 30S ribosomal subunit. Contacts proteins S9 and S11.

Its function is as follows. One of the primary rRNA binding proteins, it binds directly to 16S rRNA where it nucleates assembly of the head domain of the 30S subunit. Is located at the subunit interface close to the decoding center, probably blocks exit of the E-site tRNA. The sequence is that of Small ribosomal subunit protein uS7 from Rickettsia massiliae (strain Mtu5).